Here is a 474-residue protein sequence, read N- to C-terminus: Selection and upkeep of intraepithelial T-cells protein 4 (474 aa).

Positions 1-25 (MGATEVLTSYCVVLCLLQMVALSSG) are cleaved as a signal peptide. Residues 26–241 (HFTVIGSQRP…VLSGELFSWK (216 aa)) lie on the Extracellular side of the membrane. One can recognise an Ig-like V-type domain in the interval 27–140 (FTVIGSQRPI…EEHITEVKVT (114 aa)). Cystine bridges form between Cys48–Cys122 and Cys162–Cys216. Asn111 and Asn199 each carry an N-linked (GlcNAc...) asparagine glycan. The Ig-like C1-type domain maps to 141 to 234 (ATSSDIQILM…QEQSINIVLS (94 aa)). The helical transmembrane segment at 242-262 (IVWIMILSTISFVMIDFCMTY) threads the bilayer. The Cytoplasmic segment spans residues 263-298 (CVQQQLIHEESLSTVDNDQCESDQSEGTCYKRNYPW). A helical membrane pass occupies residues 299–319 (IIIAVVPIISVFAIIGVMLFL). Over 320–341 (HLEQRVTILEQHFELDTLWLED) the chain is Extracellular. Residues 342–362 (ISVILCVVIVSNINLIPLIYF) form a helical membrane-spanning segment. The Cytoplasmic segment spans residues 363-381 (RLHEHVPRFKDRSPILNKA). Residues 382-402 (VVFLHFIYFSIVCGTILLVHL) traverse the membrane as a helical segment. At 403 to 420 (QLRNKVSISDSLFSLYNS) the chain is on the extracellular side. Residues 421–441 (WLTDISMILGFLLSIFIVTTI) form a helical membrane-spanning segment. At 442 to 474 (AKSSLFNKKWCIGLCIHMKEAEATGGPCEGEEL) the chain is on the cytoplasmic side.

It belongs to the SKINT family. Expressed in skin, thymus and, to a lower extent, bladder and testis.

It localises to the membrane. Its function is as follows. May act by engaging a cell surface molecule on immature T-cells in the embryonic thymus. This chain is Selection and upkeep of intraepithelial T-cells protein 4 (Skint4), found in Mus musculus (Mouse).